Here is a 156-residue protein sequence, read N- to C-terminus: Small ribosomal subunit protein uS7 (156 aa).

The protein belongs to the universal ribosomal protein uS7 family. In terms of assembly, part of the 30S ribosomal subunit. Contacts proteins S9 and S11.

In terms of biological role, one of the primary rRNA binding proteins, it binds directly to 16S rRNA where it nucleates assembly of the head domain of the 30S subunit. Is located at the subunit interface close to the decoding center, probably blocks exit of the E-site tRNA. The polypeptide is Small ribosomal subunit protein uS7 (Streptococcus pyogenes serotype M3 (strain ATCC BAA-595 / MGAS315)).